The sequence spans 33 residues: Cytochrome b6-f complex subunit 8 (33 aa).

A helical transmembrane segment spans residues 2-22 (LFTLGWASLAAMFSFSIAMVV).

Belongs to the PetN family. As to quaternary structure, the 4 large subunits of the cytochrome b6-f complex are cytochrome b6, subunit IV (17 kDa polypeptide, PetD), cytochrome f and the Rieske protein, while the 4 small subunits are PetG, PetL, PetM and PetN. The complex functions as a dimer.

The protein resides in the cellular thylakoid membrane. Its function is as follows. Component of the cytochrome b6-f complex, which mediates electron transfer between photosystem II (PSII) and photosystem I (PSI), cyclic electron flow around PSI, and state transitions. The polypeptide is Cytochrome b6-f complex subunit 8 (Synechococcus sp. (strain CC9605)).